Here is a 522-residue protein sequence, read N- to C-terminus: Flavin-dependent halogenase armH1 (522 aa).

FAD is bound by residues G16, A19, and E49. Chloride contacts are provided by S328 and G329. I330 lines the FAD pocket.

It belongs to the flavin-dependent halogenase family.

The enzyme catalyses melleolide F + FADH2 + chloride + O2 = 6'-chloromelleolide F + FAD + 2 H2O + H(+). Flavin-dependent halogenase involved in the biosynthesis of melleolides, a range of antifungal and phytotoxic polyketide derivatives composed of an orsellinic acid (OA) moiety esterified to various sesquiterpene alcohols. The halogenase catalyzes the transfer of a single chlorine atom to the melleolide backbone, resulting in a 6'-chloromelleolide product. The enzyme acts on free substrate and does not depend on carrier-protein-dependent acceptor molecules. The chain is Flavin-dependent halogenase armH1 from Armillaria mellea (Honey mushroom).